The following is a 226-amino-acid chain: Probable chemoreceptor glutamine deamidase CheD (226 aa).

Residues 207-226 (PGGMRVERFDTPSRRDPVGA) are disordered.

The protein belongs to the CheD family.

The catalysed reaction is L-glutaminyl-[protein] + H2O = L-glutamyl-[protein] + NH4(+). Probably deamidates glutamine residues to glutamate on methyl-accepting chemotaxis receptors (MCPs), playing an important role in chemotaxis. The polypeptide is Probable chemoreceptor glutamine deamidase CheD (Bordetella bronchiseptica (strain ATCC BAA-588 / NCTC 13252 / RB50) (Alcaligenes bronchisepticus)).